Reading from the N-terminus, the 514-residue chain is DNA-(apurinic or apyrimidinic site) endonuclease 2 (514 aa).

Residues asparagine 8 and glutamate 48 each contribute to the Mg(2+) site. Tyrosine 156 is an active-site residue. Residues aspartate 197, asparagine 199, aspartate 303, and histidine 304 each coordinate Mg(2+). Aspartate 197 serves as the catalytic Proton donor/acceptor. The Proton acceptor role is filled by histidine 304. The tract at residues 359–417 (PSNQTQVHMRKNKARVRSTRSRPSKTGSSRGQKNLMSYFQPSSSGPQTSNLDLPSLGTL) is disordered. Over residues 366-381 (HMRKNKARVRSTRSRP) the composition is skewed to basic residues. Residue lysine 371 forms a Glycyl lysine isopeptide (Lys-Gly) (interchain with G-Cter in ubiquitin) linkage. Residues 382 to 410 (SKTGSSRGQKNLMSYFQPSSSGPQTSNLD) are compositionally biased toward polar residues. A required for the interaction and colocalization with PCNA in nuclear foci in presence of oxidative-induced DNA damaging agents region spans residues 390–397 (QKNLMSYF). The Zn(2+) site is built by cysteine 465, histidine 468, cysteine 491, and cysteine 505. Residues 465–514 (CGGHREPCVMRTVKKPGPNLGRHFYMCARPQGPPTDPSSRCNFFLWSRPS) form a GRF-type zinc finger.

This sequence belongs to the DNA repair enzymes AP/ExoA family. In terms of assembly, interacts with PCNA; this interaction is triggered by reactive oxygen species and increased by misincorporation of uracil in nuclear DNA. The cofactor is Mg(2+). Mn(2+) is required as a cofactor. In terms of processing, ubiquitinated by the CUL9-RBX1 complex. Ubiquitinated by MKRN3 at Lys-371 leading to proteasomal degradation.

It is found in the nucleus. It localises to the cytoplasm. The protein resides in the mitochondrion. The catalysed reaction is Exonucleolytic cleavage in the 3'- to 5'-direction to yield nucleoside 5'-phosphates.. 3'-5' exonuclease activity is activated by sodium and manganese. 3'-5' exonuclease and 3'-phosphodiesterase activities are stimulated in presence of PCNA. Its function is as follows. Functions as a weak apurinic/apyrimidinic (AP) endodeoxyribonuclease in the DNA base excision repair (BER) pathway of DNA lesions induced by oxidative and alkylating agents. Initiates repair of AP sites in DNA by catalyzing hydrolytic incision of the phosphodiester backbone immediately adjacent to the damage, generating a single-strand break with 5'-deoxyribose phosphate and 3'-hydroxyl ends. Also displays double-stranded DNA 3'-5' exonuclease, 3'-phosphodiesterase activities. Shows robust 3'-5' exonuclease activity on 3'-recessed heteroduplex DNA and is able to remove mismatched nucleotides preferentially. Shows fairly strong 3'-phosphodiesterase activity involved in the removal of 3'-damaged termini formed in DNA by oxidative agents. In the nucleus functions in the PCNA-dependent BER pathway. Plays a role in reversing blocked 3' DNA ends, problematic lesions that preclude DNA synthesis. Required for somatic hypermutation (SHM) and DNA cleavage step of class switch recombination (CSR) of immunoglobulin genes. Required for proper cell cycle progression during proliferation of peripheral lymphocytes. This is DNA-(apurinic or apyrimidinic site) endonuclease 2 (APEX2) from Bos taurus (Bovine).